A 436-amino-acid polypeptide reads, in one-letter code: Homeobox protein PKNOX1 (436 aa).

Residues 23-50 (ELKTEQDPNCSDPDAEGVSPPPIESQTP) are disordered. Residues Ser-33 and Ser-41 each carry the phosphoserine modification. The MEIS N-terminal domain occupies 80 to 163 (GSEGTTSASF…MNSETLLSGE (84 aa)). Residues 259–321 (SKNKRGVLPK…NARRRILQPM (63 aa)) constitute a DNA-binding region (homeobox; TALE-type). The segment at 401 to 436 (AGQSEDESVDSTEDEGGALAPTHISGLVLENSDSLQ) is disordered. A compositionally biased stretch (acidic residues) spans 404-416 (SEDESVDSTEDEG).

This sequence belongs to the TALE/MEIS homeobox family. As to quaternary structure, interacts with MN1.

It localises to the nucleus. Functionally, activates transcription in the presence of PBX1A and HOXA1. (Microbial infection) In complex with PBX1, binds to the 5'-TGATTGAC-3' consensus sequence in the U5 region of Moloney murine leukemia virus and promotes viral transcription. In Mus musculus (Mouse), this protein is Homeobox protein PKNOX1.